We begin with the raw amino-acid sequence, 108 residues long: Thiosulfate sulfurtransferase GlpE (108 aa).

One can recognise a Rhodanese domain in the interval His-17–Ala-105. Cys-65 acts as the Cysteine persulfide intermediate in catalysis.

This sequence belongs to the GlpE family.

It localises to the cytoplasm. It catalyses the reaction thiosulfate + hydrogen cyanide = thiocyanate + sulfite + 2 H(+). The catalysed reaction is thiosulfate + [thioredoxin]-dithiol = [thioredoxin]-disulfide + hydrogen sulfide + sulfite + 2 H(+). In terms of biological role, transferase that catalyzes the transfer of sulfur from thiosulfate to thiophilic acceptors such as cyanide or dithiols. May function in a CysM-independent thiosulfate assimilation pathway by catalyzing the conversion of thiosulfate to sulfite, which can then be used for L-cysteine biosynthesis. In Salmonella choleraesuis (strain SC-B67), this protein is Thiosulfate sulfurtransferase GlpE.